Reading from the N-terminus, the 237-residue chain is Phosphoribosylaminoimidazole-succinocarboxamide synthase (237 aa).

It belongs to the SAICAR synthetase family.

It carries out the reaction 5-amino-1-(5-phospho-D-ribosyl)imidazole-4-carboxylate + L-aspartate + ATP = (2S)-2-[5-amino-1-(5-phospho-beta-D-ribosyl)imidazole-4-carboxamido]succinate + ADP + phosphate + 2 H(+). Its pathway is purine metabolism; IMP biosynthesis via de novo pathway; 5-amino-1-(5-phospho-D-ribosyl)imidazole-4-carboxamide from 5-amino-1-(5-phospho-D-ribosyl)imidazole-4-carboxylate: step 1/2. This is Phosphoribosylaminoimidazole-succinocarboxamide synthase from Proteus mirabilis (strain HI4320).